The chain runs to 106 residues: ATP-dependent Clp protease adapter protein ClpS (106 aa).

Belongs to the ClpS family. As to quaternary structure, binds to the N-terminal domain of the chaperone ClpA.

Functionally, involved in the modulation of the specificity of the ClpAP-mediated ATP-dependent protein degradation. This is ATP-dependent Clp protease adapter protein ClpS from Serratia proteamaculans (strain 568).